The primary structure comprises 425 residues: E3 ubiquitin-protein ligase CBLL2 (425 aa).

Residues 57–97 form an RING-type zinc finger; that stretch reads CDKCDLPIKIYGRIIPCKHAFCYHCANLYDKVGYKVCPRCR. Residues 96-154 form an HYB domain region; sequence CRYPVLRIEAHKRGSVFMCSIVQQCKRTYLSQKSLQAHIKRRHKRARKQVTSASLEKVR. Residues 112–138 form a C2H2-type zinc finger; it reads FMCSIVQQCKRTYLSQKSLQAHIKRRH. 2 disordered regions span residues 241 to 297 and 382 to 425; these read DHIQ…HQMP and TDAM…HRRY. A compositionally biased stretch (pro residues) spans 398-408; the sequence is PCPPTRSPPPS. A compositionally biased stretch (basic residues) spans 412 to 425; the sequence is GRSHHSHQRRHRRY.

As to quaternary structure, homodimer. As to expression, exclusively expressed in testis and sperm, including spermatocytes, round and elongated spermatids, and Leydig cells.

It is found in the cytoplasm. The enzyme catalyses S-ubiquitinyl-[E2 ubiquitin-conjugating enzyme]-L-cysteine + [acceptor protein]-L-lysine = [E2 ubiquitin-conjugating enzyme]-L-cysteine + N(6)-ubiquitinyl-[acceptor protein]-L-lysine.. It participates in protein modification; protein ubiquitination. In terms of biological role, E3 ubiquitin ligase catalyzing the covalent attachment of ubiquitin moieties onto substrate proteins. May operate on tyrosine-phosphorylated SRC substrates. The chain is E3 ubiquitin-protein ligase CBLL2 from Homo sapiens (Human).